The sequence spans 142 residues: Large ribosomal subunit protein uL13 (142 aa).

Belongs to the universal ribosomal protein uL13 family. In terms of assembly, part of the 50S ribosomal subunit.

Functionally, this protein is one of the early assembly proteins of the 50S ribosomal subunit, although it is not seen to bind rRNA by itself. It is important during the early stages of 50S assembly. The chain is Large ribosomal subunit protein uL13 from Treponema pallidum (strain Nichols).